The primary structure comprises 316 residues: Annexin A13 (316 aa).

Glycine 2 carries N-myristoyl glycine lipidation. Annexin repeat units follow at residues 14 to 85, 86 to 157, 169 to 241, and 245 to 316; these read FDVD…ALLD, RPSE…SLLQ, DLAG…TLVR, and DCED…ALLH.

The protein belongs to the annexin family. In terms of assembly, monomer and homodimer. Detected in epithelial cells in colon and jejunum (at protein level). Detected in epithelial cells in jejunum.

It localises to the apical cell membrane. The protein localises to the cell membrane. It is found in the cytoplasmic vesicle. Functionally, binds to membranes enriched in phosphatidylserine or phosphatidylglycerol in a calcium-dependent manner. Half-maximal membrane binding requires about 60 uM calcium. Does not bind to membranes that lack phospholipids with an acidic headgroup. Its function is as follows. Binds to membranes enriched in phosphatidylserine or phosphatidylglycerol in a calcium-dependent manner, but requires higher calcium levels for membrane binding than isoform A. Half-maximal membrane binding requires about 320 uM calcium. The chain is Annexin A13 (ANXA13) from Homo sapiens (Human).